Reading from the N-terminus, the 130-residue chain is Large ribosomal subunit protein bL12 (130 aa).

Belongs to the bacterial ribosomal protein bL12 family. As to quaternary structure, homodimer. Part of the ribosomal stalk of the 50S ribosomal subunit. Forms a multimeric L10(L12)X complex, where L10 forms an elongated spine to which 2 to 4 L12 dimers bind in a sequential fashion. Binds GTP-bound translation factors.

In terms of biological role, forms part of the ribosomal stalk which helps the ribosome interact with GTP-bound translation factors. Is thus essential for accurate translation. The sequence is that of Large ribosomal subunit protein bL12 from Chlamydia muridarum (strain MoPn / Nigg).